The sequence spans 284 residues: Phosphatidylserine decarboxylase proenzyme (284 aa).

Active-site charge relay system; for autoendoproteolytic cleavage activity residues include aspartate 88, histidine 145, and serine 248. The active-site Schiff-base intermediate with substrate; via pyruvic acid; for decarboxylase activity is the serine 248. Serine 248 is modified (pyruvic acid (Ser); by autocatalysis).

It belongs to the phosphatidylserine decarboxylase family. PSD-B subfamily. Prokaryotic type I sub-subfamily. As to quaternary structure, heterodimer of a large membrane-associated beta subunit and a small pyruvoyl-containing alpha subunit. Requires pyruvate as cofactor. Post-translationally, is synthesized initially as an inactive proenzyme. Formation of the active enzyme involves a self-maturation process in which the active site pyruvoyl group is generated from an internal serine residue via an autocatalytic post-translational modification. Two non-identical subunits are generated from the proenzyme in this reaction, and the pyruvate is formed at the N-terminus of the alpha chain, which is derived from the carboxyl end of the proenzyme. The autoendoproteolytic cleavage occurs by a canonical serine protease mechanism, in which the side chain hydroxyl group of the serine supplies its oxygen atom to form the C-terminus of the beta chain, while the remainder of the serine residue undergoes an oxidative deamination to produce ammonia and the pyruvoyl prosthetic group on the alpha chain. During this reaction, the Ser that is part of the protease active site of the proenzyme becomes the pyruvoyl prosthetic group, which constitutes an essential element of the active site of the mature decarboxylase.

It localises to the cell membrane. It catalyses the reaction a 1,2-diacyl-sn-glycero-3-phospho-L-serine + H(+) = a 1,2-diacyl-sn-glycero-3-phosphoethanolamine + CO2. It participates in phospholipid metabolism; phosphatidylethanolamine biosynthesis; phosphatidylethanolamine from CDP-diacylglycerol: step 2/2. Catalyzes the formation of phosphatidylethanolamine (PtdEtn) from phosphatidylserine (PtdSer). The polypeptide is Phosphatidylserine decarboxylase proenzyme (Delftia acidovorans (strain DSM 14801 / SPH-1)).